A 311-amino-acid chain; its full sequence is tRNA dimethylallyltransferase (311 aa).

11 to 18 (GPTAVGKT) contributes to the ATP binding site. Position 13 to 18 (13 to 18 (TAVGKT)) interacts with substrate. The segment at 36–39 (DSVQ) is interaction with substrate tRNA.

Belongs to the IPP transferase family. In terms of assembly, monomer. Requires Mg(2+) as cofactor.

It catalyses the reaction adenosine(37) in tRNA + dimethylallyl diphosphate = N(6)-dimethylallyladenosine(37) in tRNA + diphosphate. Its function is as follows. Catalyzes the transfer of a dimethylallyl group onto the adenine at position 37 in tRNAs that read codons beginning with uridine, leading to the formation of N6-(dimethylallyl)adenosine (i(6)A). The polypeptide is tRNA dimethylallyltransferase (Exiguobacterium sp. (strain ATCC BAA-1283 / AT1b)).